The primary structure comprises 441 residues: Acidic phosphoprotein (441 aa).

The segment at residues 1–15 is a signal peptide (or 24); it reads MKAISLGLISSIIFS. 2 N-linked (GlcNAc...) asparagine glycosylation sites follow: N21 and N112. 18 consecutive repeat copies span residues 186 to 193, 194 to 201, 202 to 209, 210 to 217, 218 to 225, 226 to 233, 234 to 241, 242 to 249, 250 to 257, 258 to 265, 266 to 273, 274 to 281, 282 to 289, 290 to 297, 298 to 305, 306 to 313, 353 to 360, and 361 to 368. The segment at 186–313 is 16 X 8 AA tandem repeats; sequence EEDPYLLQEE…SNEAGEGTAN (128 aa). Residues 232 to 416 form a disordered region; that stretch reads LNEEDAGTTN…EKEKKKEKKV (185 aa). Residues 238–247 are compositionally biased toward low complexity; sequence GTTNEAGEGT. A compositionally biased stretch (acidic residues) spans 248 to 273; the sequence is TNEEGEGAANEYDAETLNEYDADTLN. A compositionally biased stretch (polar residues) spans 294–306; it reads STTNEAGEGTSNE. Residues 312–332 show a composition bias toward acidic residues; it reads ANDDEELDEEVASIFDDDEHA. A compositionally biased stretch (basic and acidic residues) spans 349–371; sequence ENVKKGNENEGEQKGNENEGEQK. Residues 353 to 370 form a 2 X 9 AA tandem repeats region; sequence KGNENEGEQKGNENEGEQ. A compositionally biased stretch (basic residues) spans 372-415; sequence GKKKKAKEKSKKKVKNKPTMTTKKKKKKEKKKKKKEKEKKKEKK.

The protein resides in the cell membrane. Its function is as follows. During infection, this phosphoprotein probably modulates the structure of the red cell membrane to the advantage of the parasite, although its precise function is not known. The chain is Acidic phosphoprotein (PCEMA1) from Plasmodium chabaudi.